Reading from the N-terminus, the 199-residue chain is NADH-quinone oxidoreductase subunit C (199 aa).

Belongs to the complex I 30 kDa subunit family. As to quaternary structure, NDH-1 is composed of 14 different subunits. Subunits NuoB, C, D, E, F, and G constitute the peripheral sector of the complex.

The protein resides in the cell inner membrane. The catalysed reaction is a quinone + NADH + 5 H(+)(in) = a quinol + NAD(+) + 4 H(+)(out). Functionally, NDH-1 shuttles electrons from NADH, via FMN and iron-sulfur (Fe-S) centers, to quinones in the respiratory chain. The immediate electron acceptor for the enzyme in this species is believed to be ubiquinone. Couples the redox reaction to proton translocation (for every two electrons transferred, four hydrogen ions are translocated across the cytoplasmic membrane), and thus conserves the redox energy in a proton gradient. The protein is NADH-quinone oxidoreductase subunit C of Polynucleobacter necessarius subsp. necessarius (strain STIR1).